We begin with the raw amino-acid sequence, 813 residues long: Sorting nexin-29 (813 aa).

In terms of domain architecture, RUN spans 36 to 180 (SDSDSRVTCL…ILFAINIDNK (145 aa)). 5 positions are modified to phosphoserine: Ser-268, Ser-291, Ser-292, Ser-330, and Ser-344. The segment at 269 to 299 (FDDEEDEQNSGDVFKKTPGAGESSEDNSDRS) is disordered. Positions 346–357 (DDEDVDENEDDV) are enriched in acidic residues. The interval 346 to 378 (DDEDVDENEDDVYGNSSGRKHRGHSESPEKPLE) is disordered. Phosphoserine occurs at positions 445 and 450. The stretch at 466–545 (TISELRQATV…VLKVQLKKYV (80 aa)) forms a coiled coil. Position 639 is a phosphoserine (Ser-639). Thr-641 carries the phosphothreonine modification. Residues Ser-642 and Ser-646 each carry the phosphoserine modification. Residues 656–779 (ALINVWIPSV…PFFVDITPPG (124 aa)) enclose the PX domain. The interval 778 to 813 (PGEPVNSRPKAASRFPKLSRGQPRETRNVEPQSGDL) is disordered.

It belongs to the sorting nexin family.

The chain is Sorting nexin-29 (SNX29) from Homo sapiens (Human).